We begin with the raw amino-acid sequence, 418 residues long: Tyrosine--tRNA ligase (418 aa).

Residue Y38 coordinates L-tyrosine. Positions 43–52 (CTARSLHIGS) match the 'HIGH' region motif. 2 residues coordinate L-tyrosine: Y175 and Q179. Positions 235 to 239 (KMGKT) match the 'KMSKS' region motif. K238 is an ATP binding site. Residues 348 to 413 (LSVVKLLQVS…CGKKRHLKVV (66 aa)) form the S4 RNA-binding domain.

It belongs to the class-I aminoacyl-tRNA synthetase family. TyrS type 1 subfamily. Homodimer.

It is found in the cytoplasm. The enzyme catalyses tRNA(Tyr) + L-tyrosine + ATP = L-tyrosyl-tRNA(Tyr) + AMP + diphosphate + H(+). In terms of biological role, catalyzes the attachment of tyrosine to tRNA(Tyr) in a two-step reaction: tyrosine is first activated by ATP to form Tyr-AMP and then transferred to the acceptor end of tRNA(Tyr). The chain is Tyrosine--tRNA ligase from Ehrlichia ruminantium (strain Welgevonden).